The primary structure comprises 156 residues: Protein-export protein SecB (156 aa).

This sequence belongs to the SecB family. Homotetramer, a dimer of dimers. One homotetramer interacts with 1 SecA dimer.

It is found in the cytoplasm. One of the proteins required for the normal export of preproteins out of the cell cytoplasm. It is a molecular chaperone that binds to a subset of precursor proteins, maintaining them in a translocation-competent state. It also specifically binds to its receptor SecA. The chain is Protein-export protein SecB from Paraburkholderia phymatum (strain DSM 17167 / CIP 108236 / LMG 21445 / STM815) (Burkholderia phymatum).